Here is a 285-residue protein sequence, read N- to C-terminus: Shikimate dehydrogenase (NADP(+)) (285 aa).

Shikimate-binding positions include 22 to 24 (SMS) and Thr69. Lys73 acts as the Proton acceptor in catalysis. NADP(+) is bound at residue Asp85. Shikimate-binding residues include Asn94 and Asp110. Residues 136–140 (GAGGA), 160–165 (NRTVAR), and Met225 each bind NADP(+). Position 227 (Tyr227) interacts with shikimate. Residue Gly248 participates in NADP(+) binding.

Belongs to the shikimate dehydrogenase family. As to quaternary structure, homodimer.

It catalyses the reaction shikimate + NADP(+) = 3-dehydroshikimate + NADPH + H(+). It functions in the pathway metabolic intermediate biosynthesis; chorismate biosynthesis; chorismate from D-erythrose 4-phosphate and phosphoenolpyruvate: step 4/7. Its function is as follows. Involved in the biosynthesis of the chorismate, which leads to the biosynthesis of aromatic amino acids. Catalyzes the reversible NADPH linked reduction of 3-dehydroshikimate (DHSA) to yield shikimate (SA). The polypeptide is Shikimate dehydrogenase (NADP(+)) (Caulobacter vibrioides (strain ATCC 19089 / CIP 103742 / CB 15) (Caulobacter crescentus)).